A 129-amino-acid polypeptide reads, in one-letter code: Large ribosomal subunit protein bL19 (129 aa).

This sequence belongs to the bacterial ribosomal protein bL19 family.

Functionally, this protein is located at the 30S-50S ribosomal subunit interface and may play a role in the structure and function of the aminoacyl-tRNA binding site. The chain is Large ribosomal subunit protein bL19 from Granulibacter bethesdensis (strain ATCC BAA-1260 / CGDNIH1).